The primary structure comprises 193 residues: MAAVLNLQLKVDASLKAFLGAENRPLHGKTGATLEQILESIFANIAIQGTSEQTEFLDLVVEVKSMEDQSVLGSYNLKEVVNLIKAFKTTSSDPNINKMTFRQVCEAFAPEARNGLVKLKYKGVFTNLFTTMPEVGSKYPELMFDFNKGLNMFIMNKAQQKVITNMNRRLLQTEFAKSENEAKLSSVSTDLCI.

In terms of processing, the N-terminus is blocked.

Its subcellular location is the virion. The protein is Capsid protein of Crataegus (hawthorn).